Consider the following 211-residue polypeptide: Superoxide dismutase [Fe] (211 aa).

4 residues coordinate Fe cation: His-34, His-85, Asp-171, and His-175.

It belongs to the iron/manganese superoxide dismutase family. In terms of assembly, homotetramer. It depends on Fe cation as a cofactor.

It is found in the cytoplasm. The enzyme catalyses 2 superoxide + 2 H(+) = H2O2 + O2. Functionally, destroys superoxide anion radicals which are normally produced within the cells and which are toxic to biological systems. This Saccharolobus solfataricus (strain ATCC 35092 / DSM 1617 / JCM 11322 / P2) (Sulfolobus solfataricus) protein is Superoxide dismutase [Fe] (sod).